Reading from the N-terminus, the 511-residue chain is BAR/IMD domain-containing adapter protein 2-like 1 (511 aa).

An IMD domain is found at 1-249 (MSRGPEEVNR…MNMIEEIKTP (249 aa)). A coiled-coil region spans residues 115–154 (MNATLKRYQTEHKNKLESLEKSQAELKKIRRKSQGSRNAL). Phosphothreonine is present on residues T248 and T257. A phosphoserine mark is found at S261 and S281. The tract at residues 302-328 (NNPATAAPNSQRVNNSTGTSEDPSLQR) is disordered. Positions 303–328 (NPATAAPNSQRVNNSTGTSEDPSLQR) are enriched in polar residues. S331 and S354 each carry phosphoserine. One can recognise an SH3 domain in the interval 339–402 (MKKQKVKTIF…PSSYTKLLEE (64 aa)). T412 carries the phosphothreonine modification. S414, S420, and S422 each carry phosphoserine. Residues 451–511 (RRADSARTTS…TNDRSAPIIR (61 aa)) are disordered. The binds F-actin stretch occupies residues 483 to 511 (PPFLSGENPFATVKLRPTVTNDRSAPIIR).

Interacts with RAC1. Binds to F-actin. Interacts with FASLG. Interacts (via SH3 domain) with E.coli effector protein EspF(U) (via PXXP motifs). Identified in a complex containing at least WASL, BAIAP2L1 and E.coli EspF(U). Interacts with E.coli intimin receptor Tir. Phosphorylated on tyrosine in response to insulin.

Its subcellular location is the cytoplasm. It localises to the cytoskeleton. May function as adapter protein. Involved in the formation of clusters of actin bundles. Plays a role in the reorganization of the actin cytoskeleton in response to bacterial infection. This Homo sapiens (Human) protein is BAR/IMD domain-containing adapter protein 2-like 1 (BAIAP2L1).